We begin with the raw amino-acid sequence, 337 residues long: Phenylalanine--tRNA ligase alpha subunit (337 aa).

Glutamate 258 serves as a coordination point for Mg(2+).

The protein belongs to the class-II aminoacyl-tRNA synthetase family. Phe-tRNA synthetase alpha subunit type 1 subfamily. Tetramer of two alpha and two beta subunits. Requires Mg(2+) as cofactor.

It localises to the cytoplasm. It carries out the reaction tRNA(Phe) + L-phenylalanine + ATP = L-phenylalanyl-tRNA(Phe) + AMP + diphosphate + H(+). This chain is Phenylalanine--tRNA ligase alpha subunit, found in Burkholderia mallei (strain ATCC 23344).